Here is a 158-residue protein sequence, read N- to C-terminus: ABA-responsive protein ABR18 (158 aa).

This sequence belongs to the BetVI family.

This chain is ABA-responsive protein ABR18, found in Pisum sativum (Garden pea).